The chain runs to 160 residues: Lipoprotein signal peptidase (160 aa).

Transmembrane regions (helical) follow at residues 6–26, 58–78, and 95–115; these read VWSS…IKYL, LAWL…AFVL, and FALV…HGYV. Catalysis depends on residues aspartate 117 and aspartate 135. A helical transmembrane segment spans residues 127–147; that stretch reads SFAVFNLADAFITIGAGLIIL.

It belongs to the peptidase A8 family.

The protein resides in the cell inner membrane. The catalysed reaction is Release of signal peptides from bacterial membrane prolipoproteins. Hydrolyzes -Xaa-Yaa-Zaa-|-(S,diacylglyceryl)Cys-, in which Xaa is hydrophobic (preferably Leu), and Yaa (Ala or Ser) and Zaa (Gly or Ala) have small, neutral side chains.. It participates in protein modification; lipoprotein biosynthesis (signal peptide cleavage). Functionally, this protein specifically catalyzes the removal of signal peptides from prolipoproteins. The chain is Lipoprotein signal peptidase from Brucella abortus (strain S19).